Reading from the N-terminus, the 118-residue chain is MNALNQAHCEACRADAPKVTDEELAELIREIPDWNIEVRDGHMELERVFLFKNFKHALAFTNAVGEIAEAEGHHPGLLTEWGKVTVTWWSHSIKGLHRNDFIMCARTDKVAETAEGRK.

The protein belongs to the pterin-4-alpha-carbinolamine dehydratase family.

It catalyses the reaction (4aS,6R)-4a-hydroxy-L-erythro-5,6,7,8-tetrahydrobiopterin = (6R)-L-erythro-6,7-dihydrobiopterin + H2O. In Pseudomonas putida (strain ATCC 700007 / DSM 6899 / JCM 31910 / BCRC 17059 / LMG 24140 / F1), this protein is Putative pterin-4-alpha-carbinolamine dehydratase.